Here is a 56-residue protein sequence, read N- to C-terminus: Large ribosomal subunit protein eL20 (56 aa).

Residues 1 to 24 are disordered; the sequence is MSTYTVRGSFPARDGPQQFEKEVE.

This sequence belongs to the eukaryotic ribosomal protein eL20 family. Part of the 50S ribosomal subunit. Binds 23S rRNA.

This Haloarcula marismortui (strain ATCC 43049 / DSM 3752 / JCM 8966 / VKM B-1809) (Halobacterium marismortui) protein is Large ribosomal subunit protein eL20.